The primary structure comprises 145 residues: MSFREVLIVGWQYLRAFVLIYLCLLTGNAISSLLPIIIPGSIIGMLILFVLLAFQLIPAHWAKPGCSLLLKNMTLLFLPIGVGVMNYYDQLSQQIIPIVFSCLISTAIVMIIVAYSSHYVHRERPIVGSTSEINNEQQKQEKQEK.

Transmembrane regions (helical) follow at residues 6–26, 34–54, 65–85, and 95–115; these read VLIV…CLLT, LPII…LLAF, GCSL…VGVM, and IIPI…IVAY.

This sequence belongs to the UPF0299 family.

The protein resides in the cell inner membrane. The chain is UPF0299 membrane protein plu1549 from Photorhabdus laumondii subsp. laumondii (strain DSM 15139 / CIP 105565 / TT01) (Photorhabdus luminescens subsp. laumondii).